Reading from the N-terminus, the 406-residue chain is Tryptophan synthase beta chain (406 aa).

Lysine 99 carries the N6-(pyridoxal phosphate)lysine modification.

It belongs to the TrpB family. As to quaternary structure, tetramer of two alpha and two beta chains. The cofactor is pyridoxal 5'-phosphate.

The catalysed reaction is (1S,2R)-1-C-(indol-3-yl)glycerol 3-phosphate + L-serine = D-glyceraldehyde 3-phosphate + L-tryptophan + H2O. It participates in amino-acid biosynthesis; L-tryptophan biosynthesis; L-tryptophan from chorismate: step 5/5. Functionally, the beta subunit is responsible for the synthesis of L-tryptophan from indole and L-serine. In Brucella abortus (strain 2308), this protein is Tryptophan synthase beta chain.